Here is a 700-residue protein sequence, read N- to C-terminus: Mitogen-activated protein kinase 9 (700 aa).

Residues 107-398 (YRIQEVIGKG…AEEALTDPYF (292 aa)) enclose the Protein kinase domain. Residues 113-121 (IGKGSYGVV) and Lys-136 contribute to the ATP site. The active-site Proton acceptor is Asp-233. Thr-269 bears the Phosphothreonine mark. Positions 269 to 271 (TDY) match the TXY motif. Tyr-271 carries the post-translational modification Phosphotyrosine. Positions 475–523 (EESNGSGSAIPMERKHASLPRSTTVHSTPIPPKEQPLAASLKSSRPVSD) are disordered.

Belongs to the protein kinase superfamily. CMGC Ser/Thr protein kinase family. MAP kinase subfamily. Dually phosphorylated on Thr-269 and Tyr-271, which activates the enzyme.

It catalyses the reaction L-seryl-[protein] + ATP = O-phospho-L-seryl-[protein] + ADP + H(+). The catalysed reaction is L-threonyl-[protein] + ATP = O-phospho-L-threonyl-[protein] + ADP + H(+). Activated by threonine and tyrosine phosphorylation. The protein is Mitogen-activated protein kinase 9 (MPK9) of Oryza sativa subsp. japonica (Rice).